Here is a 458-residue protein sequence, read N- to C-terminus: Bifunctional protein GlmU (458 aa).

Residues 1–232 form a pyrophosphorylase region; that stretch reads MISPLSVIIL…TFEIEGVNNR (232 aa). UDP-N-acetyl-alpha-D-glucosamine is bound by residues 10–13, Lys-24, Gln-79, 84–85, 106–108, Gly-142, Glu-157, Asn-172, and Asn-230; these read LAAG, GT, and YGD. Mg(2+) is bound at residue Asp-108. Asn-230 provides a ligand contact to Mg(2+). Residues 233 to 253 are linker; it reads QQLASLERTWQGKLVADLQEA. Positions 254–458 are N-acetyltransferase; it reads GVQFADPTRV…KDNFQRPTKK (205 aa). Residues Arg-336 and Lys-354 each coordinate UDP-N-acetyl-alpha-D-glucosamine. His-366 (proton acceptor) is an active-site residue. Residues Tyr-369 and Asn-380 each coordinate UDP-N-acetyl-alpha-D-glucosamine. Acetyl-CoA-binding positions include Ala-383, 389-390, Ser-408, Ala-426, and Arg-443; that span reads NY.

In the N-terminal section; belongs to the N-acetylglucosamine-1-phosphate uridyltransferase family. The protein in the C-terminal section; belongs to the transferase hexapeptide repeat family. In terms of assembly, homotrimer. It depends on Mg(2+) as a cofactor.

It is found in the cytoplasm. The enzyme catalyses alpha-D-glucosamine 1-phosphate + acetyl-CoA = N-acetyl-alpha-D-glucosamine 1-phosphate + CoA + H(+). It carries out the reaction N-acetyl-alpha-D-glucosamine 1-phosphate + UTP + H(+) = UDP-N-acetyl-alpha-D-glucosamine + diphosphate. The protein operates within nucleotide-sugar biosynthesis; UDP-N-acetyl-alpha-D-glucosamine biosynthesis; N-acetyl-alpha-D-glucosamine 1-phosphate from alpha-D-glucosamine 6-phosphate (route II): step 2/2. It participates in nucleotide-sugar biosynthesis; UDP-N-acetyl-alpha-D-glucosamine biosynthesis; UDP-N-acetyl-alpha-D-glucosamine from N-acetyl-alpha-D-glucosamine 1-phosphate: step 1/1. It functions in the pathway bacterial outer membrane biogenesis; LPS lipid A biosynthesis. Catalyzes the last two sequential reactions in the de novo biosynthetic pathway for UDP-N-acetylglucosamine (UDP-GlcNAc). The C-terminal domain catalyzes the transfer of acetyl group from acetyl coenzyme A to glucosamine-1-phosphate (GlcN-1-P) to produce N-acetylglucosamine-1-phosphate (GlcNAc-1-P), which is converted into UDP-GlcNAc by the transfer of uridine 5-monophosphate (from uridine 5-triphosphate), a reaction catalyzed by the N-terminal domain. This Psychrobacter arcticus (strain DSM 17307 / VKM B-2377 / 273-4) protein is Bifunctional protein GlmU.